A 406-amino-acid polypeptide reads, in one-letter code: Tyrosine--tRNA ligase (406 aa).

An L-tyrosine-binding site is contributed by Tyr-35. Residues 40 to 49 (ATSTSLHIGH) carry the 'HIGH' region motif. The L-tyrosine site is built by Tyr-166 and Gln-170. The short motif at 226-230 (KMGKS) is the 'KMSKS' region element. Residue Lys-229 coordinates ATP. The S4 RNA-binding domain maps to 341–405 (ILLIDLMVLS…IGKKRILRVI (65 aa)).

This sequence belongs to the class-I aminoacyl-tRNA synthetase family. TyrS type 1 subfamily. Homodimer.

Its subcellular location is the cytoplasm. It carries out the reaction tRNA(Tyr) + L-tyrosine + ATP = L-tyrosyl-tRNA(Tyr) + AMP + diphosphate + H(+). In terms of biological role, catalyzes the attachment of tyrosine to tRNA(Tyr) in a two-step reaction: tyrosine is first activated by ATP to form Tyr-AMP and then transferred to the acceptor end of tRNA(Tyr). The polypeptide is Tyrosine--tRNA ligase (Borrelia turicatae (strain 91E135)).